The sequence spans 152 residues: Ribosomal RNA large subunit methyltransferase H (152 aa).

Residues L71, G101, and 120–125 (LSKLTF) contribute to the S-adenosyl-L-methionine site.

This sequence belongs to the RNA methyltransferase RlmH family. Homodimer.

It is found in the cytoplasm. It carries out the reaction pseudouridine(1915) in 23S rRNA + S-adenosyl-L-methionine = N(3)-methylpseudouridine(1915) in 23S rRNA + S-adenosyl-L-homocysteine + H(+). Specifically methylates the pseudouridine at position 1915 (m3Psi1915) in 23S rRNA. The chain is Ribosomal RNA large subunit methyltransferase H from Thermosipho melanesiensis (strain DSM 12029 / CIP 104789 / BI429).